Consider the following 173-residue polypeptide: Protein-export protein SecB (173 aa).

The segment at 148–173 is disordered; it reads QQQKQRREQGTSDSAPSGSPDNGGRQ. The span at 158–167 shows a compositional bias: polar residues; the sequence is TSDSAPSGSP.

Belongs to the SecB family. Homotetramer, a dimer of dimers. One homotetramer interacts with 1 SecA dimer.

It localises to the cytoplasm. In terms of biological role, one of the proteins required for the normal export of preproteins out of the cell cytoplasm. It is a molecular chaperone that binds to a subset of precursor proteins, maintaining them in a translocation-competent state. It also specifically binds to its receptor SecA. The sequence is that of Protein-export protein SecB from Halorhodospira halophila (strain DSM 244 / SL1) (Ectothiorhodospira halophila (strain DSM 244 / SL1)).